Reading from the N-terminus, the 144-residue chain is Putative pre-16S rRNA nuclease (144 aa).

It belongs to the YqgF nuclease family.

The protein resides in the cytoplasm. Could be a nuclease involved in processing of the 5'-end of pre-16S rRNA. This Ralstonia nicotianae (strain ATCC BAA-1114 / GMI1000) (Ralstonia solanacearum) protein is Putative pre-16S rRNA nuclease.